The primary structure comprises 150 residues: Large ribosomal subunit protein bL9 (150 aa).

It belongs to the bacterial ribosomal protein bL9 family.

Binds to the 23S rRNA. This chain is Large ribosomal subunit protein bL9, found in Yersinia enterocolitica serotype O:8 / biotype 1B (strain NCTC 13174 / 8081).